A 392-amino-acid polypeptide reads, in one-letter code: S-adenosylmethionine synthase (392 aa).

His-15 contacts ATP. Asp-17 contacts Mg(2+). Residue Glu-43 participates in K(+) binding. Positions 56 and 99 each coordinate L-methionine. Residues 99–109 (QSKDIAQGVDE) are flexible loop. ATP contacts are provided by residues 173-175 (DGK), 239-240 (KF), Asp-248, 254-255 (RK), Ala-271, and Lys-275. Position 248 (Asp-248) interacts with L-methionine. Lys-279 serves as a coordination point for L-methionine.

This sequence belongs to the AdoMet synthase family. In terms of assembly, homotetramer; dimer of dimers. Requires Mg(2+) as cofactor. K(+) serves as cofactor.

The protein resides in the cytoplasm. It catalyses the reaction L-methionine + ATP + H2O = S-adenosyl-L-methionine + phosphate + diphosphate. It participates in amino-acid biosynthesis; S-adenosyl-L-methionine biosynthesis; S-adenosyl-L-methionine from L-methionine: step 1/1. Catalyzes the formation of S-adenosylmethionine (AdoMet) from methionine and ATP. The overall synthetic reaction is composed of two sequential steps, AdoMet formation and the subsequent tripolyphosphate hydrolysis which occurs prior to release of AdoMet from the enzyme. The sequence is that of S-adenosylmethionine synthase from Finegoldia magna (strain ATCC 29328 / DSM 20472 / WAL 2508) (Peptostreptococcus magnus).